The sequence spans 493 residues: MDYPMKKVKIFFNYLMAHRFKLCFLPLMVAIAVEASRLSTQDLQNFYLYLQNNHTSLTMFFLYLALGSTLYLMTRPKPVYLVDFSCYLPPSHLKASTQRIMQHVRLVREAGAWKQESDYLMDFCEKILERSGLGQETYVPEGLQTLPLQQNLAVSRIETEEVIIGAVDNLFRNTGISPSDIGILVVNSSTFNPTPSLSSILVNKFKLRDNIKSLNLGGMGCSAGVIAIDAAKSLLQVHRNTYALVVSTENITQNLYMGNNKSMLVTNCLFRIGGAAILLSNRSIDRKRAKYELVHTVRVHTGADDRSYECATQEEDEDGIVGVSLSKNLPMVAARTLKINIATLGPLVLPISEKFHFFVRFVKKKFLNPKLKHYIPDFKLAFEHFCIHAGGRALIDEMEKNLHLTPLDVEASRMTLHRFGNTSSSSIWYELAYTEAKGRMTKGDRIWQIALGSGFKCNSSVWVALRNVKPSTNNPWEQCLHKYPVEIDIDLKE.

Positions 1–35 (MDYPMKKVKIFFNYLMAHRFKLCFLPLMVAIAVEA) are cleaved as a signal peptide. A helical transmembrane segment spans residues 52 to 74 (NNHTSLTMFFLYLALGSTLYLMT). The 296-residue stretch at 71–366 (YLMTRPKPVY…FFVRFVKKKF (296 aa)) folds into the FAE domain. Residues C221, H300, H384, H388, H417, and N421 contribute to the active site.

The protein belongs to the thiolase-like superfamily. Chalcone/stilbene synthases family. In terms of tissue distribution, expressed in siliques.

The protein localises to the membrane. The catalysed reaction is a very-long-chain acyl-CoA + malonyl-CoA + H(+) = a very-long-chain 3-oxoacyl-CoA + CO2 + CoA. The protein operates within lipid metabolism; fatty acid biosynthesis. The polypeptide is 3-ketoacyl-CoA synthase 16 (Arabidopsis thaliana (Mouse-ear cress)).